A 181-amino-acid polypeptide reads, in one-letter code: Acireductone dioxygenase (181 aa).

Fe(2+) is bound by residues His98, His100, Glu104, and His142. Residues His98, His100, Glu104, and His142 each coordinate Ni(2+).

This sequence belongs to the acireductone dioxygenase (ARD) family. In terms of assembly, monomer. It depends on Fe(2+) as a cofactor. Requires Ni(2+) as cofactor.

It carries out the reaction 1,2-dihydroxy-5-(methylsulfanyl)pent-1-en-3-one + O2 = 3-(methylsulfanyl)propanoate + CO + formate + 2 H(+). The catalysed reaction is 1,2-dihydroxy-5-(methylsulfanyl)pent-1-en-3-one + O2 = 4-methylsulfanyl-2-oxobutanoate + formate + 2 H(+). It participates in amino-acid biosynthesis; L-methionine biosynthesis via salvage pathway; L-methionine from S-methyl-5-thio-alpha-D-ribose 1-phosphate: step 5/6. In terms of biological role, catalyzes 2 different reactions between oxygen and the acireductone 1,2-dihydroxy-3-keto-5-methylthiopentene (DHK-MTPene) depending upon the metal bound in the active site. Fe-containing acireductone dioxygenase (Fe-ARD) produces formate and 2-keto-4-methylthiobutyrate (KMTB), the alpha-ketoacid precursor of methionine in the methionine recycle pathway. Ni-containing acireductone dioxygenase (Ni-ARD) produces methylthiopropionate, carbon monoxide and formate, and does not lie on the methionine recycle pathway. This chain is Acireductone dioxygenase, found in Synechococcus sp. (strain ATCC 27144 / PCC 6301 / SAUG 1402/1) (Anacystis nidulans).